We begin with the raw amino-acid sequence, 308 residues long: Mitochondrial import receptor subunit TOM40B (308 aa).

The required for mitochondrial targeting stretch occupies residues 281–308; it reads PLPVTLALGAFLNHWRNRFHCGFSITVG.

The protein belongs to the Tom40 family. As to quaternary structure, forms part of the preprotein translocase of the outer mitochondrial membrane (TOM complex) containing TOMM22, TOMM40, TOMM40L and TOMM70. Interacts with mitochondrial targeting sequences. In terms of tissue distribution, widely expressed. Higher levels in heart, brain and liver, very low level in testis.

The protein resides in the mitochondrion outer membrane. Its function is as follows. Potential channel-forming protein implicated in import of protein precursors into mitochondria. This is Mitochondrial import receptor subunit TOM40B from Rattus norvegicus (Rat).